A 285-amino-acid polypeptide reads, in one-letter code: NADPH-dependent 7-cyano-7-deazaguanine reductase (285 aa).

91–93 contributes to the substrate binding site; sequence IES. 93–94 contributes to the NADPH binding site; it reads SK. The active-site Thioimide intermediate is cysteine 191. Residue aspartate 198 is the Proton donor of the active site. 230–231 serves as a coordination point for substrate; that stretch reads HE. An NADPH-binding site is contributed by 259-260; it reads RG.

Belongs to the GTP cyclohydrolase I family. QueF type 2 subfamily. Homodimer.

The protein resides in the cytoplasm. The catalysed reaction is 7-aminomethyl-7-carbaguanine + 2 NADP(+) = 7-cyano-7-deazaguanine + 2 NADPH + 3 H(+). It functions in the pathway tRNA modification; tRNA-queuosine biosynthesis. Functionally, catalyzes the NADPH-dependent reduction of 7-cyano-7-deazaguanine (preQ0) to 7-aminomethyl-7-deazaguanine (preQ1). This is NADPH-dependent 7-cyano-7-deazaguanine reductase from Legionella pneumophila (strain Corby).